We begin with the raw amino-acid sequence, 238 residues long: uncharacterized protein (238 aa).

The N-terminal stretch at 1 to 19 (MKINLFFVFLFELLHFVAA) is a signal peptide. Residues 20–197 (YSCEGDESAA…LALYGHLSQK (178 aa)) lie on the Lumenal side of the membrane. The chain crosses the membrane as a helical span at residues 198 to 216 (YTPLGMNVAIFGISAYIMY). Over 217 to 238 (RSSKKAKQKQAAAAAAAAAKKK) the chain is Cytoplasmic.

It is found in the endoplasmic reticulum membrane. This is an uncharacterized protein from Schizosaccharomyces pombe (strain 972 / ATCC 24843) (Fission yeast).